Here is a 338-residue protein sequence, read N- to C-terminus: Fructose-1,6-bisphosphatase class 1 1 (338 aa).

Mg(2+) is bound by residues E91, D113, L115, and D116. Substrate-binding positions include 116-119 (DGSS), N208, and K274. Position 280 (E280) interacts with Mg(2+).

It belongs to the FBPase class 1 family. Homotetramer. Requires Mg(2+) as cofactor.

The protein localises to the cytoplasm. The catalysed reaction is beta-D-fructose 1,6-bisphosphate + H2O = beta-D-fructose 6-phosphate + phosphate. The protein operates within carbohydrate biosynthesis; gluconeogenesis. The polypeptide is Fructose-1,6-bisphosphatase class 1 1 (Cupriavidus taiwanensis (strain DSM 17343 / BCRC 17206 / CCUG 44338 / CIP 107171 / LMG 19424 / R1) (Ralstonia taiwanensis (strain LMG 19424))).